Consider the following 487-residue polypeptide: Transmembrane protein 161B (487 aa).

N-linked (GlcNAc...) asparagine glycosylation is present at N34. The chain crosses the membrane as a helical span at residues 107 to 127 (LVDFTVAATVVYLVTEVYYNF). N-linked (GlcNAc...) asparagine glycosylation occurs at N135. 2 helical membrane-spanning segments follow: residues 136–156 (ISLV…FSLT) and 169–189 (SVCV…LIVT). N-linked (GlcNAc...) asparagine glycosylation occurs at N203. 5 helical membrane passes run 228–248 (FKFF…FPGL), 265–285 (ITQT…LLWV), 305–325 (LMTE…LCAL), 367–387 (VFYY…MLLH), and 459–479 (LSFL…FGLF).

This sequence belongs to the TMEM161 family.

It is found in the cell membrane. Functionally, essential for maintaining normal cardiac rhythm in the developing heart and for neonatal survival. Inhibits potassium and calcium currents in the cardiomyocytes, this assists in timely action potential repolarization and thereby maintains normal cardiac rhythm. The polypeptide is Transmembrane protein 161B (TMEM161B) (Homo sapiens (Human)).